A 1847-amino-acid chain; its full sequence is Cilia- and flagella-associated protein 65 (1847 aa).

The chain crosses the membrane as a helical span at residues 112–132 (FFTIIPQPIFLSPGITLTLPI). In terms of domain architecture, MSP spans 805–914 (DLKLDTHKSI…VHYRIRLVGM (110 aa)). Residues 1457-1483 (QRELMRQYHKELQEWNEEKARQEVEFT) are a coiled coil. The interval 1668–1721 (YEGRKSKEQEEDLFGKMPGGQEDDEEEEEDEEEAEEEEEEIEEEMSKDEEDIDK) is disordered. The segment covering 1688–1720 (QEDDEEEEEDEEEAEEEEEEIEEEMSKDEEDID) has biased composition (acidic residues).

This sequence belongs to the CFAP65 family. As to quaternary structure, interacts with CFAP47. In terms of tissue distribution, predominantly expressed in testis. Highly expressed in round and elongating spermatids. Expressed also in certain ciliated organs, such as the brain, lung and kidney.

The protein resides in the cell projection. The protein localises to the cilium. Its subcellular location is the flagellum membrane. It is found in the cytoplasmic vesicle. It localises to the secretory vesicle. The protein resides in the acrosome membrane. The protein localises to the cytoplasm. Functionally, plays a role in flagellar formation and sperm motility. This is Cilia- and flagella-associated protein 65 from Mus musculus (Mouse).